We begin with the raw amino-acid sequence, 337 residues long: 5-formaminoimidazole-4-carboxamide-1-(beta)-D-ribofuranosyl 5'-monophosphate synthetase (337 aa).

5-amino-1-(5-phospho-beta-D-ribosyl)imidazole-4-carboxamide contacts are provided by H9 and S73. An ATP-grasp domain is found at 94-324; it reads KKIFEWEADQ…IGRRIAREIR (231 aa). Residues 124-184 and E206 each bind ATP; that span reads PEDV…VPMY. A 5-amino-1-(5-phospho-beta-D-ribosyl)imidazole-4-carboxamide-binding site is contributed by N234. Mg(2+)-binding residues include E273 and E286.

The protein belongs to the phosphohexose mutase family. The cofactor is Mg(2+). Mn(2+) serves as cofactor.

The catalysed reaction is 5-amino-1-(5-phospho-beta-D-ribosyl)imidazole-4-carboxamide + formate + ATP = 5-formamido-1-(5-phospho-D-ribosyl)imidazole-4-carboxamide + ADP + phosphate. The protein operates within purine metabolism; IMP biosynthesis via de novo pathway; 5-formamido-1-(5-phospho-D-ribosyl)imidazole-4-carboxamide from 5-amino-1-(5-phospho-D-ribosyl)imidazole-4-carboxamide (formate route): step 1/1. Catalyzes the ATP- and formate-dependent formylation of 5-aminoimidazole-4-carboxamide-1-beta-d-ribofuranosyl 5'-monophosphate (AICAR) to 5-formaminoimidazole-4-carboxamide-1-beta-d-ribofuranosyl 5'-monophosphate (FAICAR) in the absence of folates. In Saccharolobus solfataricus (strain ATCC 35092 / DSM 1617 / JCM 11322 / P2) (Sulfolobus solfataricus), this protein is 5-formaminoimidazole-4-carboxamide-1-(beta)-D-ribofuranosyl 5'-monophosphate synthetase.